Consider the following 337-residue polypeptide: Ketol-acid reductoisomerase (NADP(+)) (337 aa).

The KARI N-terminal Rossmann domain occupies Leu3–Thr183. Residues Tyr26–Gln29, Lys49, Ser52, Ser54, and Asp84–Gln87 contribute to the NADP(+) site. The active site involves His109. Gly135 lines the NADP(+) pocket. One can recognise a KARI C-terminal knotted domain in the interval Thr184–Val329. Asp192, Glu196, Glu228, and Glu232 together coordinate Mg(2+). Ser253 contacts substrate.

The protein belongs to the ketol-acid reductoisomerase family. Requires Mg(2+) as cofactor.

The catalysed reaction is (2R)-2,3-dihydroxy-3-methylbutanoate + NADP(+) = (2S)-2-acetolactate + NADPH + H(+). It carries out the reaction (2R,3R)-2,3-dihydroxy-3-methylpentanoate + NADP(+) = (S)-2-ethyl-2-hydroxy-3-oxobutanoate + NADPH + H(+). The protein operates within amino-acid biosynthesis; L-isoleucine biosynthesis; L-isoleucine from 2-oxobutanoate: step 2/4. It participates in amino-acid biosynthesis; L-valine biosynthesis; L-valine from pyruvate: step 2/4. Involved in the biosynthesis of branched-chain amino acids (BCAA). Catalyzes an alkyl-migration followed by a ketol-acid reduction of (S)-2-acetolactate (S2AL) to yield (R)-2,3-dihydroxy-isovalerate. In the isomerase reaction, S2AL is rearranged via a Mg-dependent methyl migration to produce 3-hydroxy-3-methyl-2-ketobutyrate (HMKB). In the reductase reaction, this 2-ketoacid undergoes a metal-dependent reduction by NADPH to yield (R)-2,3-dihydroxy-isovalerate. The chain is Ketol-acid reductoisomerase (NADP(+)) from Mycobacterium bovis (strain BCG / Pasteur 1173P2).